Consider the following 402-residue polypeptide: Flavohemoprotein (402 aa).

In terms of domain architecture, Globin spans 1–136 (MLSEKTIEIV…IADAFISIEA (136 aa)). Residue His85 coordinates heme b. Active-site charge relay system residues include Tyr95 and Glu135. The tract at residues 147–402 (GGWKDFRNFV…EFFGPAASLQ (256 aa)) is reductase. The FAD-binding FR-type domain maps to 150 to 260 (KDFRNFVVVK…SAPAGDFVLN (111 aa)). FAD is bound by residues Tyr188 and 204 to 207 (RQYS). Residue 273-278 (GVGITP) participates in NADP(+) binding. 394 to 397 (FFGP) contacts FAD.

It belongs to the globin family. Two-domain flavohemoproteins subfamily. This sequence in the C-terminal section; belongs to the flavoprotein pyridine nucleotide cytochrome reductase family. Heme b is required as a cofactor. The cofactor is FAD.

The catalysed reaction is 2 nitric oxide + NADPH + 2 O2 = 2 nitrate + NADP(+) + H(+). It catalyses the reaction 2 nitric oxide + NADH + 2 O2 = 2 nitrate + NAD(+) + H(+). Functionally, is involved in NO detoxification in an aerobic process, termed nitric oxide dioxygenase (NOD) reaction that utilizes O(2) and NAD(P)H to convert NO to nitrate, which protects the bacterium from various noxious nitrogen compounds. Therefore, plays a central role in the inducible response to nitrosative stress. This Bacillus thuringiensis subsp. konkukian (strain 97-27) protein is Flavohemoprotein.